We begin with the raw amino-acid sequence, 463 residues long: RuvB-like 2 (463 aa).

N-acetylalanine is present on A2. K9 is covalently cross-linked (Glycyl lysine isopeptide (Lys-Gly) (interchain with G-Cter in SUMO2)). An ATP-binding site is contributed by 77–84; it reads GQPGTGKT. S437 carries the phosphoserine modification. Glycyl lysine isopeptide (Lys-Gly) (interchain with G-Cter in SUMO2) cross-links involve residues K444 and K456.

This sequence belongs to the RuvB family. Forms homohexameric rings. Can form a dodecamer with RUVBL1 made of two stacked hexameric rings; however, even though RUVBL1 and RUVBL2 are present in equimolar ratio, the oligomeric status of each hexamer is not known. Oligomerization may regulate binding to nucleic acids and conversely, binding to nucleic acids may affect the dodecameric assembly. Interaction of the complex with DHX34 results in conformational changes of the N-terminus of the RUVBL2 subunits, resulting in loss of nucleotide binding ability and ATP hydrolysis of the complex. Interacts with the transcriptional activation domain of MYC. Interacts with ATF2. Component of the RNA polymerase II holoenzyme complex. May also act to bridge the LEF1/TCF1-CTNNB1 complex and TBP. Component of the NuA4 histone acetyltransferase complex which contains the catalytic subunit KAT5/TIP60 and the subunits EP400, TRRAP/PAF400, BRD8/SMAP, EPC1, DMAP1/DNMAP1, RUVBL1/TIP49, RUVBL2, ING3, actin, ACTL6A/BAF53A, MORF4L1/MRG15, MORF4L2/MRGX, MRGBP, YEATS4/GAS41, VPS72/YL1 and MEAF6. The NuA4 complex interacts with MYC and the adenovirus E1A protein. RUVBL2 interacts with EP400. Component of a NuA4-related complex which contains EP400, TRRAP/PAF400, SRCAP, BRD8/SMAP, EPC1, DMAP1/DNMAP1, RUVBL1/TIP49, RUVBL2, actin, ACTL6A/BAF53A, VPS72 and YEATS4/GAS41. Interacts with NPAT. Component of the chromatin-remodeling INO80 complex; specifically part of a complex module associated with the helicase ATP-binding and the helicase C-terminal domain of INO80. Component of some MLL1/MLL complex, at least composed of the core components KMT2A/MLL1, ASH2L, HCFC1/HCF1, WDR5 and RBBP5, as well as the facultative components BACC1, CHD8, E2F6, HSP70, INO80C, KANSL1, LAS1L, MAX, MCRS1, MGA, MYST1/MOF, PELP1, PHF20, PRP31, RING2, RUVB1/TIP49A, RUVB2/TIP49B, SENP3, TAF1, TAF4, TAF6, TAF7, TAF9 and TEX10. Interacts with IGHMBP2. Interacts with TELO2. Interacts with HINT1. Component of a SWR1-like complex. Component of the R2TP complex composed at least of RUVBL1, RUVBL2, RPAP3 and PIHD1. Component of the PAQosome complex which is responsible for the biogenesis of several protein complexes and which consists of R2TP complex members RUVBL1, RUVBL2, RPAP3 and PIH1D1, URI complex members PFDN2, PFDN6, PDRG1, UXT and URI1 as well as ASDURF, POLR2E and DNAAF10/WDR92. Interacts with ITFG1. Interacts with ZMYND10. Interacts with WAC; WAC positively regulates MTOR activity by promoting the assembly of the TTT complex composed of TELO2, TTI1 and TTI2 and the RUVBL complex composed of RUVBL1 and RUVBL2 into the TTT-RUVBL complex which leads to the dimerization of the mTORC1 complex and its subsequent activation. Forms a complex with APPL1 and APPL2. Interacts with ZNHIT2 (via HIT-type zinc finger) in the presence of ATP or ADP; shows a stronger interaction in the presence of ADP. The RUVBL1/RUVBL2 complex interacts with ZNHIT1 (via HIT-type zinc finger), ZNHIT3 (via HIT-type zinc finger), ZNHIT6 (via HIT-type zinc finger) and DDX59/ZNHIT5 (via HIT-type zinc finger) in the presence of ADP. Interacts with NOPCHAP1; the interaction is direct and disrupted upon ATP binding. Interacts with SMG1.

Its subcellular location is the nucleus matrix. The protein resides in the nucleus. It localises to the nucleoplasm. It is found in the cytoplasm. The protein localises to the membrane. Its subcellular location is the dynein axonemal particle. The catalysed reaction is ATP + H2O = ADP + phosphate + H(+). Possesses single-stranded DNA-stimulated ATPase and ATP-dependent DNA helicase (5' to 3') activity; hexamerization is thought to be critical for ATP hydrolysis and adjacent subunits in the ring-like structure contribute to the ATPase activity. Component of the NuA4 histone acetyltransferase complex which is involved in transcriptional activation of select genes principally by acetylation of nucleosomal histones H4 and H2A. This modification may both alter nucleosome-DNA interactions and promote interaction of the modified histones with other proteins which positively regulate transcription. This complex may be required for the activation of transcriptional programs associated with oncogene and proto-oncogene mediated growth induction, tumor suppressor mediated growth arrest and replicative senescence, apoptosis, and DNA repair. The NuA4 complex ATPase and helicase activities seem to be, at least in part, contributed by the association of RUVBL1 and RUVBL2 with EP400. NuA4 may also play a direct role in DNA repair when recruited to sites of DNA damage. Component of a SWR1-like complex that specifically mediates the removal of histone H2A.Z/H2AZ1 from the nucleosome. Proposed core component of the chromatin remodeling INO80 complex which exhibits DNA- and nucleosome-activated ATPase activity and catalyzes ATP-dependent nucleosome sliding. Plays an essential role in oncogenic transformation by MYC and also modulates transcriptional activation by the LEF1/TCF1-CTNNB1 complex. May also inhibit the transcriptional activity of ATF2. Involved in the endoplasmic reticulum (ER)-associated degradation (ERAD) pathway where it negatively regulates expression of ER stress response genes. May play a role in regulating the composition of the U5 snRNP complex. This Bos taurus (Bovine) protein is RuvB-like 2 (RUVBL2).